A 125-amino-acid chain; its full sequence is UPF0225 protein Cgl1438/cg1626 (125 aa).

The protein belongs to the UPF0225 family.

In Corynebacterium glutamicum (strain ATCC 13032 / DSM 20300 / JCM 1318 / BCRC 11384 / CCUG 27702 / LMG 3730 / NBRC 12168 / NCIMB 10025 / NRRL B-2784 / 534), this protein is UPF0225 protein Cgl1438/cg1626.